We begin with the raw amino-acid sequence, 366 residues long: Alanine racemase (366 aa).

Catalysis depends on lysine 40, which acts as the Proton acceptor; specific for D-alanine. Position 40 is an N6-(pyridoxal phosphate)lysine (lysine 40). Arginine 136 contributes to the substrate binding site. Tyrosine 263 acts as the Proton acceptor; specific for L-alanine in catalysis. Methionine 310 contributes to the substrate binding site.

This sequence belongs to the alanine racemase family. The cofactor is pyridoxal 5'-phosphate.

The catalysed reaction is L-alanine = D-alanine. Its pathway is amino-acid biosynthesis; D-alanine biosynthesis; D-alanine from L-alanine: step 1/1. Catalyzes the interconversion of L-alanine and D-alanine. May also act on other amino acids. The chain is Alanine racemase (alr) from Streptococcus equi subsp. equi (strain 4047).